The following is a 1142-amino-acid chain: Melanoma-associated antigen C1 (1142 aa).

The segment at 1-132 (MGDKDMPTAG…DVQSPLQNPA (132 aa)) is disordered. A compositionally biased stretch (low complexity) spans 13-42 (SLLQSSSESPQSCPEGEDSQSPLQIPQSSP). Position 63 is a phosphoserine (Ser-63). Over residues 76–87 (SQSPLQIPQSSP) the composition is skewed to low complexity. The span at 92–103 (TQSPLQNSQSSP) shows a compositional bias: polar residues. Ser-207 and Ser-382 each carry phosphoserine. Disordered stretches follow at residues 502-778 (TQST…LQRP) and 791-893 (LQSS…SLTD). Over residues 614 to 626 (SPLQGEEFQSSLQ) the composition is skewed to polar residues. Residues 627-659 (SPVSICSSSTPSSLPQSFPESSQSPPEGPVQSP) are compositionally biased toward low complexity. Over residues 671–680 (HSQSPLQSPE) the composition is skewed to polar residues. 2 stretches are compositionally biased toward low complexity: residues 741–762 (QSPVSICSSSTSLSLPQSFPES) and 807–889 (QSPL…LESD). An MAGE domain is found at 908-1106 (LDEKVDELAR…ITFPSSYKDA (199 aa)). Position 1063 is a phosphoserine (Ser-1063). The tract at residues 1118–1142 (IDTTDDSTATESASSSVMSPSFSSE) is disordered. Positions 1123–1142 (DSTATESASSSVMSPSFSSE) are enriched in low complexity.

As to expression, expressed in testis and in tumors of a wide variety of histologic types.

It is found in the cytoplasm. The protein is Melanoma-associated antigen C1 (MAGEC1) of Homo sapiens (Human).